Here is a 169-residue protein sequence, read N- to C-terminus: uncharacterized protein (169 aa).

One can recognise a Nudix hydrolase domain in the interval 28-157 (ELHLVIHVCI…EFIPYFFLNQ (130 aa)). The short motif at 65–87 (AGSALKGETSQQAAEREVQEELG) is the Nudix box element. Residues glutamate 81 and glutamate 85 each coordinate Mg(2+).

This sequence belongs to the Nudix hydrolase family. Mg(2+) serves as cofactor.

This is an uncharacterized protein from Listeria monocytogenes serovar 1/2a (strain ATCC BAA-679 / EGD-e).